The primary structure comprises 107 residues: Phosphoribosyl-ATP pyrophosphatase (107 aa).

The protein belongs to the PRA-PH family.

It is found in the cytoplasm. It catalyses the reaction 1-(5-phospho-beta-D-ribosyl)-ATP + H2O = 1-(5-phospho-beta-D-ribosyl)-5'-AMP + diphosphate + H(+). It participates in amino-acid biosynthesis; L-histidine biosynthesis; L-histidine from 5-phospho-alpha-D-ribose 1-diphosphate: step 2/9. The sequence is that of Phosphoribosyl-ATP pyrophosphatase from Sinorhizobium medicae (strain WSM419) (Ensifer medicae).